Consider the following 509-residue polypeptide: Histidine ammonia-lyase (509 aa).

The segment at residues 142–144 (ASG) is a cross-link (5-imidazolinone (Ala-Gly)). 2,3-didehydroalanine (Ser) is present on Ser-143.

The protein belongs to the PAL/histidase family. Post-translationally, contains an active site 4-methylidene-imidazol-5-one (MIO), which is formed autocatalytically by cyclization and dehydration of residues Ala-Ser-Gly.

It is found in the cytoplasm. It catalyses the reaction L-histidine = trans-urocanate + NH4(+). The protein operates within amino-acid degradation; L-histidine degradation into L-glutamate; N-formimidoyl-L-glutamate from L-histidine: step 1/3. The chain is Histidine ammonia-lyase from Pseudomonas aeruginosa (strain UCBPP-PA14).